Consider the following 47-residue polypeptide: Large ribosomal subunit protein eL40 (47 aa).

This sequence belongs to the eukaryotic ribosomal protein eL40 family.

This Halobacterium salinarum (strain ATCC 29341 / DSM 671 / R1) protein is Large ribosomal subunit protein eL40.